Here is a 310-residue protein sequence, read N- to C-terminus: Porphobilinogen deaminase (310 aa).

Cysteine 236 is modified (S-(dipyrrolylmethanemethyl)cysteine).

The protein belongs to the HMBS family. As to quaternary structure, monomer. It depends on dipyrromethane as a cofactor.

It catalyses the reaction 4 porphobilinogen + H2O = hydroxymethylbilane + 4 NH4(+). It functions in the pathway porphyrin-containing compound metabolism; protoporphyrin-IX biosynthesis; coproporphyrinogen-III from 5-aminolevulinate: step 2/4. In terms of biological role, tetrapolymerization of the monopyrrole PBG into the hydroxymethylbilane pre-uroporphyrinogen in several discrete steps. This is Porphobilinogen deaminase from Nitratiruptor sp. (strain SB155-2).